We begin with the raw amino-acid sequence, 472 residues long: Serralysin A (472 aa).

Residues 1–17 constitute a propeptide that is removed on maturation; it reads MEKNLSSRDDDALHSLS. Position 186 (histidine 186) interacts with Zn(2+). Residue glutamate 187 is part of the active site. The Zn(2+) site is built by histidine 190 and tyrosine 221. Residues arginine 258, glycine 260, threonine 262, aspartate 290, glycine 292, glycine 293, threonine 332, glutamate 334, glycine 339, glycine 341, aspartate 343, asparagine 348, alanine 350, asparagine 352, glycine 356, glycine 357, alanine 358, glycine 359, aspartate 361, glycine 365, glycine 366, glycine 367, glycine 368, aspartate 370, glycine 374, glycine 375, glycine 377, aspartate 379, aspartate 388, aspartate 395, and aspartate 405 each coordinate Ca(2+). Hemolysin-type calcium-binding repeat units follow at residues 337–354 and 355–372; these read IGGSGNDLLIGNNADNIL and RGGAGDDILYGGGGADRL.

Belongs to the peptidase M10B family. The cofactor is Ca(2+). Zn(2+) serves as cofactor.

Its subcellular location is the secreted. It catalyses the reaction Preferential cleavage of bonds with hydrophobic residues in P1'.. The protein is Serralysin A (prtA) of Dickeya chrysanthemi (Pectobacterium chrysanthemi).